A 400-amino-acid chain; its full sequence is Serine/threonine transporter SstT (400 aa).

The next 10 membrane-spanning stretches (helical) occupy residues 11 to 31 (IGLV…GWLA), 45 to 65 (FVGA…MAAI), 81 to 101 (IMYM…SFLF), 138 to 158 (AIAE…GFAL), 175 to 195 (AISQ…LGLV), 213 to 233 (ILMV…PLII), 242 to 264 (YPLV…SSAA), 295 to 315 (MAGA…TLGI), 327 to 347 (LVAT…LLLI), and 354 to 374 (FSIP…IGVI).

It belongs to the dicarboxylate/amino acid:cation symporter (DAACS) (TC 2.A.23) family.

The protein localises to the cell inner membrane. It carries out the reaction L-serine(in) + Na(+)(in) = L-serine(out) + Na(+)(out). It catalyses the reaction L-threonine(in) + Na(+)(in) = L-threonine(out) + Na(+)(out). Involved in the import of serine and threonine into the cell, with the concomitant import of sodium (symport system). This is Serine/threonine transporter SstT from Psychrobacter cryohalolentis (strain ATCC BAA-1226 / DSM 17306 / VKM B-2378 / K5).